We begin with the raw amino-acid sequence, 347 residues long: Phenylalanine--tRNA ligase alpha subunit (347 aa).

E265 is a binding site for Mg(2+).

This sequence belongs to the class-II aminoacyl-tRNA synthetase family. Phe-tRNA synthetase alpha subunit type 1 subfamily. In terms of assembly, tetramer of two alpha and two beta subunits. Requires Mg(2+) as cofactor.

Its subcellular location is the cytoplasm. It carries out the reaction tRNA(Phe) + L-phenylalanine + ATP = L-phenylalanyl-tRNA(Phe) + AMP + diphosphate + H(+). The sequence is that of Phenylalanine--tRNA ligase alpha subunit from Wolbachia sp. subsp. Drosophila simulans (strain wRi).